The primary structure comprises 321 residues: Peptidase 1 (321 aa).

An N-terminal signal peptide occupies residues 1 to 18 (MKIILAIASLLVLSAVYA). Positions 19-98 (RPASIKTFEE…LKTQFDLNAE (80 aa)) are excised as a propeptide. Asn34 carries an N-linked (GlcNAc...) asparagine glycan. Cys130 and Cys170 are joined by a disulfide. Cys133 is a catalytic residue. An N-linked (GlcNAc...) asparagine glycan is attached at Asn151. Residues His269 and Asn289 contribute to the active site.

The protein belongs to the peptidase C1 family.

It is found in the secreted. The catalysed reaction is Broad endopeptidase specificity.. Functionally, probable thiol protease. This is Peptidase 1 (EURM1) from Euroglyphus maynei (Mayne's house dust mite).